The chain runs to 149 residues: Large ribosomal subunit protein uL24 (149 aa).

This sequence belongs to the universal ribosomal protein uL24 family. Part of the 50S ribosomal subunit.

Its function is as follows. One of two assembly initiator proteins, it binds directly to the 5'-end of the 23S rRNA, where it nucleates assembly of the 50S subunit. Functionally, located at the polypeptide exit tunnel on the outside of the subunit. The protein is Large ribosomal subunit protein uL24 of Hyperthermus butylicus (strain DSM 5456 / JCM 9403 / PLM1-5).